Consider the following 124-residue polypeptide: Sporulation initiation phosphotransferase F (124 aa).

One can recognise a Response regulatory domain in the interval 5–119 (KILIVDDQYG…EIRDAVKKYL (115 aa)). Mg(2+) is bound by residues aspartate 10, aspartate 11, aspartate 54, and lysine 56. Residue aspartate 54 is modified to 4-aspartylphosphate.

Mg(2+) is required as a cofactor. In terms of processing, phosphorylated by KinA and KinB. Dephosphorylated by RapA and RapB.

The protein resides in the cytoplasm. In terms of biological role, key element in the phosphorelay regulating sporulation initiation. Phosphorylation of spo0B during sporulation initiation. In Bacillus subtilis (strain 168), this protein is Sporulation initiation phosphotransferase F (spo0F).